The chain runs to 434 residues: MAQFDLVHINCQYLDRHLTFPLLEFLCGKEIYNQQELLEYILETVKKTNMIDYTMDTRKRLNLSQEMPEELVQQKADVLATLKQLQNEVAPIMKATDILKDGETMKDSKTFVSALQRDYNFKMEHLYSAYKLAKYLYECGNYQESTSYLYFCLIVMAPSDKNYLDVLWGKLAAEILTLNWNTALEDLTRLRDYIDNASFSTLQALQQRTWLIHWSVLVFFNHPKGRDLIIEMFLYKPLYLNAIQTMCPHIMRYLATAVVINRTRRNALKDLIKVIQQESYTYRDPITEFLECLYVNFDFEGARLKLHECQTVILNDFFIVSCLNEFVEDARLMIFETFCRIHQCITISMLADKLNMKPNEAECWIVNLIRNARLNAKIDSKLGHVVMGTQPLSPYQQLVEKIDSLSMRSEHLADLIERKSKQKNQESIDSWKYY.

In terms of domain architecture, PCI spans 219 to 392 (FFNHPKGRDL…GHVVMGTQPL (174 aa)).

This sequence belongs to the eIF-3 subunit E family. Component of the eukaryotic translation initiation factor 3 (eIF-3) complex. The eIF-3 complex interacts with pix. Interacts with mxt.

The protein resides in the cytoplasm. In terms of biological role, component of the eukaryotic translation initiation factor 3 (eIF-3) complex, which is involved in protein synthesis of a specialized repertoire of mRNAs and, together with other initiation factors, stimulates binding of mRNA and methionyl-tRNAi to the 40S ribosome. The eIF-3 complex specifically targets and initiates translation of a subset of mRNAs involved in cell proliferation. The sequence is that of Eukaryotic translation initiation factor 3 subunit E-1 (eIF3-S6-1) from Drosophila willistoni (Fruit fly).